Here is a 349-residue protein sequence, read N- to C-terminus: ATPase GET3 (349 aa).

26-33 lines the ATP pocket; sequence KGGVGKTT. The active site involves aspartate 57. ATP contacts are provided by glutamate 242 and asparagine 269. Residues cysteine 281 and cysteine 284 each contribute to the Zn(2+) site.

It belongs to the arsA ATPase family. As to quaternary structure, homodimer. Component of the Golgi to ER traffic (GET) complex, which is composed of GET1, GET2 and GET3. Within the complex, GET1 and GET2 form a heterotetramer which is stabilized by phosphatidylinositol binding and which binds to the GET3 homodimer. Interacts with the chloride channel protein GEF1.

The protein localises to the cytoplasm. It localises to the endoplasmic reticulum. The protein resides in the golgi apparatus. Its function is as follows. ATPase required for the post-translational delivery of tail-anchored (TA) proteins to the endoplasmic reticulum. Recognizes and selectively binds the transmembrane domain of TA proteins in the cytosol. This complex then targets to the endoplasmic reticulum by membrane-bound receptors GET1 and GET2, where the tail-anchored protein is released for insertion. This process is regulated by ATP binding and hydrolysis. ATP binding drives the homodimer towards the closed dimer state, facilitating recognition of newly synthesized TA membrane proteins. ATP hydrolysis is required for insertion. Subsequently, the homodimer reverts towards the open dimer state, lowering its affinity for the GET1-GET2 receptor, and returning it to the cytosol to initiate a new round of targeting. Cooperates with the HDEL receptor ERD2 to mediate the ATP-dependent retrieval of resident ER proteins that contain a C-terminal H-D-E-L retention signal from the Golgi to the ER. Involved in low-level resistance to the oxyanions arsenite and arsenate, and in heat tolerance. This Candida tropicalis (strain ATCC MYA-3404 / T1) (Yeast) protein is ATPase GET3.